Here is a 321-residue protein sequence, read N- to C-terminus: Thylakoid-associated protein sll1697 (321 aa).

It localises to the cellular thylakoid membrane. The protein is Thylakoid-associated protein sll1697 of Synechocystis sp. (strain ATCC 27184 / PCC 6803 / Kazusa).